We begin with the raw amino-acid sequence, 471 residues long: Cysteine--tRNA ligase (471 aa).

A Zn(2+)-binding site is contributed by cysteine 30. Residues 32-42 (PTVYNFAHIGN) carry the 'HIGH' region motif. Cysteine 212, histidine 237, and glutamate 241 together coordinate Zn(2+). A 'KMSKS' region motif is present at residues 270 to 274 (KMSKS). Residue lysine 273 coordinates ATP.

It belongs to the class-I aminoacyl-tRNA synthetase family. In terms of assembly, monomer. Requires Zn(2+) as cofactor.

Its subcellular location is the cytoplasm. The catalysed reaction is tRNA(Cys) + L-cysteine + ATP = L-cysteinyl-tRNA(Cys) + AMP + diphosphate. The protein is Cysteine--tRNA ligase of Leptospira interrogans serogroup Icterohaemorrhagiae serovar copenhageni (strain Fiocruz L1-130).